The sequence spans 226 residues: 3-isopropylmalate dehydratase small subunit (226 aa).

Positions 204–226 (EAETVESAREPEAVEWAGPLADR) are disordered.

Belongs to the LeuD family. LeuD type 1 subfamily. In terms of assembly, heterodimer of LeuC and LeuD.

The catalysed reaction is (2R,3S)-3-isopropylmalate = (2S)-2-isopropylmalate. It participates in amino-acid biosynthesis; L-leucine biosynthesis; L-leucine from 3-methyl-2-oxobutanoate: step 2/4. Its function is as follows. Catalyzes the isomerization between 2-isopropylmalate and 3-isopropylmalate, via the formation of 2-isopropylmaleate. The sequence is that of 3-isopropylmalate dehydratase small subunit from Bifidobacterium animalis subsp. lactis (strain AD011).